The following is a 143-amino-acid chain: Phospholipase A2 isozymes PA3A/PA3B/PA5 (143 aa).

W10, G12, and G14 together coordinate Ca(2+). 3 cysteine pairs are disulfide-bonded: C11–C33, C32–C72, and C39–C65. The active site involves H36. D37 contacts Ca(2+).

It belongs to the phospholipase A2 family. Group III subfamily. Ca(2+) is required as a cofactor. In terms of tissue distribution, expressed by the venom gland.

Its subcellular location is the secreted. The enzyme catalyses a 1,2-diacyl-sn-glycero-3-phosphocholine + H2O = a 1-acyl-sn-glycero-3-phosphocholine + a fatty acid + H(+). Its function is as follows. PLA2 catalyzes the calcium-dependent hydrolysis of the 2-acyl groups in 3-sn-phosphoglycerides. This Heloderma suspectum (Gila monster) protein is Phospholipase A2 isozymes PA3A/PA3B/PA5.